We begin with the raw amino-acid sequence, 326 residues long: rRNA 2'-O-methyltransferase fibrillarin (326 aa).

The tract at residues 1–84 (MAFQPGSRGG…GGARGGAKGG (84 aa)) is disordered. The segment covering 7 to 83 (SRGGRGGARG…RGGARGGAKG (77 aa)) has biased composition (gly residues). Asymmetric dimethylarginine occurs at positions 8, 11, 15, 19, 23, 26, 32, 36, 39, 45, 49, 55, 59, 63, 67, 71, 74, and 78. S-adenosyl-L-methionine contacts are provided by residues 180-181 (TS), 199-200 (EF), 224-225 (DA), and 244-247 (DVAQ).

Belongs to the methyltransferase superfamily. Fibrillarin family. As to quaternary structure, component of box C/D small nucleolar ribonucleoprotein (snoRNP) particles that contain SNU13, NOP1, SIK1/NOP56 and NOP58, plus a guide RNA. By homology to other fibrillarins, some or all of the N-terminal domain arginines are modified to asymmetric dimethylarginine (DMA).

Its subcellular location is the nucleus. It localises to the nucleolus. The enzyme catalyses L-glutaminyl-[histone H2A] + S-adenosyl-L-methionine = N(5)-methyl-L-glutaminyl-[histone H2A] + S-adenosyl-L-homocysteine + H(+). Its function is as follows. S-adenosyl-L-methionine-dependent methyltransferase that has the ability to methylate both RNAs and proteins. Involved in pre-rRNA processing. Utilizes the methyl donor S-adenosyl-L-methionine to catalyze the site-specific 2'-hydroxyl methylation of ribose moieties in pre-ribosomal RNA. Site specificity is provided by a guide RNA that base pairs with the substrate. Methylation occurs at a characteristic distance from the sequence involved in base pairing with the guide RNA. Also acts as a protein methyltransferase by mediating methylation of 'Gln-105' of histone H2A (H2AQ105me), a modification that impairs binding of the FACT complex and is specifically present at 35S ribosomal DNA locus. This is rRNA 2'-O-methyltransferase fibrillarin (NOP1) from Eremothecium gossypii (strain ATCC 10895 / CBS 109.51 / FGSC 9923 / NRRL Y-1056) (Yeast).